The primary structure comprises 890 residues: DNA mismatch repair protein MutS (890 aa).

607–614 (GPNMSGKS) serves as a coordination point for ATP. Positions 832–851 (ESQLSFFGGEQSSKKQDKPL) are disordered.

This sequence belongs to the DNA mismatch repair MutS family.

Its function is as follows. This protein is involved in the repair of mismatches in DNA. It is possible that it carries out the mismatch recognition step. This protein has a weak ATPase activity. This is DNA mismatch repair protein MutS from Bacillus cereus (strain B4264).